We begin with the raw amino-acid sequence, 798 residues long: MGPPKKSRKDRSGGDKFGKKRRAEDEAFTQLVDDNDSLDATESEGIPGAASKNAETNDEQINTDEYGAKDYRSQMQLRPDHGNRPLWVAPNGHVFLESFSPVYKHAHDFLIAISEPVCRPEHIHEYKLTAYSLYAAVSVGLQTHDIVEYLKRLSKTSIPEGILEFIRLCTLSYGKVKLVLKHNKYFIESPHPEVLQKLLKDPVIQKCRLIRSEGEDFIQGTLDGKAITQFGTKLPPGATDKPTPDPAAAAGADGTTAVPEDITDFYEKIDKEEEDEDEANLKTVSFEVAQEKIEVIQKRCIEIEHPLLAEYDFRNDTNNPDINIDLKPAAVLRPYQEKSLRKMFGNGRARSGVIVLPCGAGKSLVGVTACCTVRKRALVLCNSGVSVEQWKQQFKMWSTADDSMICRFTSEAKDKPMGCGILVTTYSMITHTQKRSWEAEQTMRWLQEQEWGIMVLDEVHTIPAKMFRRVLTIVQSHCKLGLTATLLREDDKIADLNFLIGPKLYEANWLELQKKGYIARVQCAEVWCPMSPEFYREYLTTKTSKKMLLYVMNPSKFRSCQFLIKYHEQRGDKTIVFSDNVFALKHYAIKMNKPFIYGPTSQNERIQILQNFKFNSKVNTIFVSKVADTSFDLPEANVLIQISSHGGSRRQEAQRLGRILRAKKGAIAEEYNAFFYTLVSQDTMEMSYSRKRQRFLVNQGYSYKVITHLKGMDTDSDLMYGTQEEQGQLLQLVLSASDLDCEDEKLPGEPGYRPSGSGGAVRRVGGLSSMSGGDDAIYYEHRKKNIGSVHPLFKKFRG.

Disordered stretches follow at residues 1 to 62 (MGPP…EQIN) and 235 to 254 (PPGA…GADG). The Nuclear localization signal motif lies at 6–22 (KSRKDRSGGDKFGKKRR). Basic and acidic residues predominate over residues 10–25 (DRSGGDKFGKKRRAED). The segment covering 33-42 (DDNDSLDATE) has biased composition (acidic residues). The 162-residue stretch at 343–504 (MFGNGRARSG…DLNFLIGPKL (162 aa)) folds into the Helicase ATP-binding domain. An ATP-binding site is contributed by 360 to 367 (AGKSLVGV). A DEVH box motif is present at residues 457 to 460 (DEVH). The Helicase C-terminal domain occupies 558–713 (RSCQFLIKYH…KVITHLKGMD (156 aa)). The interval 746–765 (LPGEPGYRPSGSGGAVRRVG) is disordered.

This sequence belongs to the helicase family. RAD25/XPB subfamily. As to quaternary structure, component of the 7-subunit TFIIH core complex composed of haywire/XPB/ERCC3, XPD/ERCC2, GTF2H1, GTF2H2, GTF2H3, GTF2H4 and GTF2H5, which is active in NER. The core complex associates with the 3-subunit CDK-activating kinase (CAK) module composed of CCNH/cyclin H, CDK7 and MNAT1 to form the 10-subunit holoenzyme (holo-TFIIH) active in transcription. Interacts with PUF60. Interacts with ATF7IP. Interacts with Epstein-Barr virus EBNA2.

Its subcellular location is the nucleus. It carries out the reaction Couples ATP hydrolysis with the unwinding of duplex DNA by translocating in the 3'-5' direction.. It catalyses the reaction ATP + H2O = ADP + phosphate + H(+). In terms of biological role, ATP-dependent 3'-5' DNA helicase/translocase; binds dsDNA rather than ssDNA, unzipping it in a translocase rather than classical helicase activity. Component of the general transcription and DNA repair factor IIH (TFIIH) core complex. When complexed to CDK-activating kinase (CAK), involved in RNA transcription by RNA polymerase II. The ATPase activity of XPB/ERCC3, but not its helicase activity, is required for DNA opening; it may wrap around the damaged DNA wedging it open, causing localized melting and twisting that allows XPD/ERCC2 helicase to anchor. The ATP-dependent helicase activity of XPB/ERCC3 may be required for promoter escape. Also involved in transcription-coupled nucleotide excision repair (NER) of damaged DNA. In NER, TFIIH acts by opening DNA around the lesion to allow the excision of the damaged oligonucleotide and its replacement by a new DNA fragment. The structure of the TFIIH transcription complex differs from the NER-TFIIH complex; large movements by XPD/ERCC2 and XPB/ERCC3 are stabilized by XPA. The chain is General transcription and DNA repair factor IIH helicase/translocase subunit XPB (hay) from Drosophila melanogaster (Fruit fly).